A 238-amino-acid polypeptide reads, in one-letter code: Ribonuclease 3 (238 aa).

The RNase III domain maps to 8–135; sequence VAELERRIGY…LIAALYIDGG (128 aa). E48 lines the Mg(2+) pocket. D52 is an active-site residue. Mg(2+) is bound by residues D121 and E124. E124 is a catalytic residue. The region spanning 161-230 is the DRBM domain; it reads DPKTQLQEWV…AQCMLLKREG (70 aa).

Belongs to the ribonuclease III family. Homodimer. The cofactor is Mg(2+).

The protein localises to the cytoplasm. The enzyme catalyses Endonucleolytic cleavage to 5'-phosphomonoester.. Digests double-stranded RNA. Involved in the processing of primary rRNA transcript to yield the immediate precursors to the large and small rRNAs (23S and 16S). Processes some mRNAs, and tRNAs when they are encoded in the rRNA operon. Processes pre-crRNA and tracrRNA of type II CRISPR loci if present in the organism. The chain is Ribonuclease 3 from Phenylobacterium zucineum (strain HLK1).